The following is a 158-amino-acid chain: Cystin-1 (158 aa).

Residues 1 to 146 (MGSGSSRSSR…AAISYDHSEE (146 aa)) are disordered. G2 is lipidated: N-myristoyl glycine. Low complexity-rich tracts occupy residues 19 to 32 (ESLPAGPGAAALEG) and 39 to 52 (PVAAAEVPGAAAEE). The short motif at 29–33 (ALEGG) is the Ciliary targeting motif element. Basic and acidic residues predominate over residues 65–75 (DGRDETLRLLD).

Interacts (when myristoylated) with UNC119 and UNC119B; interaction is required for localization to cilium. As to expression, expressed at high levels in the kidney and pancreas. Moderate expression seen in the skeletal muscle, liver and heart. A weak expression seen in the brain, lung, uterus, prostate, testis, small intestine and colon.

The protein resides in the cell projection. The protein localises to the cilium membrane. Its subcellular location is the cytoplasm. It localises to the cytoskeleton. It is found in the cilium axoneme. This is Cystin-1 (CYS1) from Homo sapiens (Human).